The chain runs to 207 residues: Ras-related protein Rab-8B (207 aa).

Residues serine 17, glycine 18, valine 19, glycine 20, lysine 21, threonine 22, cysteine 23, threonine 35, serine 39, and threonine 40 each contribute to the GTP site. Residue threonine 22 participates in Mg(2+) binding. 2 consecutive short sequence motifs (switch) follow at residues 31–45 (DAFN…GIDF) and 63–80 (DTAG…YYRG). The Mg(2+) site is built by threonine 40 and aspartate 63. Residue glycine 66 coordinates GTP. Threonine 72 bears the Phosphothreonine; by LRRK2 mark. Positions 121, 122, 124, 152, and 153 each coordinate GTP. Serine 180 is modified (phosphoserine). Cysteine methyl ester is present on cysteine 204. Cysteine 204 is lipidated: S-geranylgeranyl cysteine. A propeptide spans 205–207 (SLL) (removed in mature form).

This sequence belongs to the small GTPase superfamily. Rab family. Associated with actin, delta-catenin and alpha and beta tubulins. Interacts with OTOF. Interacts with PEX5R. Interacts with RAB3IP. Interacts with VIM. Interacts with CDH1. Interacts with MICALL2. Interacts with GDI1, GDI2, CHML and CHM; phosphorylation at Thr-72 disrupts these interactions. Interacts with MICAL1. It depends on Mg(2+) as a cofactor. Phosphorylation of Thr-72 in the switch II region by LRRK2 prevents the association of RAB regulatory proteins, including CHM, CHML and RAB GDP dissociation inhibitors GDI1 and GDI2.

It is found in the cell membrane. The protein resides in the cytoplasmic vesicle. The protein localises to the phagosome. It localises to the phagosome membrane. Its subcellular location is the endosome membrane. The catalysed reaction is GTP + H2O = GDP + phosphate + H(+). Regulated by guanine nucleotide exchange factors (GEFs) including RAB3IP/RABIN8 which promotes the exchange of bound GDP for free GTP. Regulated by GTPase activating proteins (GAPs) which increase the GTP hydrolysis activity. Inhibited by GDP dissociation inhibitors (GDIs). Functionally, the small GTPases Rab are key regulators of intracellular membrane trafficking, from the formation of transport vesicles to their fusion with membranes. Rabs cycle between an inactive GDP-bound form and an active GTP-bound form that is able to recruit to membranes different sets of downstream effectors directly responsible for vesicle formation, movement, tethering and fusion. RAB8B may be involved in polarized vesicular trafficking and neurotransmitter release. May participate in cell junction dynamics in Sertoli cells. May also participate in the export of a subset of neosynthesized proteins through a Rab8-Rab10-Rab11-dependent endososomal export route. This Homo sapiens (Human) protein is Ras-related protein Rab-8B.